We begin with the raw amino-acid sequence, 284 residues long: L-ribulose-5-phosphate 3-epimerase UlaE (284 aa).

The protein belongs to the L-ribulose-5-phosphate 3-epimerase family.

The enzyme catalyses L-ribulose 5-phosphate = L-xylulose 5-phosphate. It functions in the pathway cofactor degradation; L-ascorbate degradation; D-xylulose 5-phosphate from L-ascorbate: step 3/4. Catalyzes the isomerization of L-xylulose-5-phosphate to L-ribulose-5-phosphate. Is involved in the anaerobic L-ascorbate utilization. This chain is L-ribulose-5-phosphate 3-epimerase UlaE, found in Salmonella paratyphi A (strain AKU_12601).